Consider the following 1394-residue polypeptide: DNA-directed RNA polymerase subunit beta'' (1394 aa).

Residues cysteine 224, cysteine 295, cysteine 302, and cysteine 305 each coordinate Zn(2+).

It belongs to the RNA polymerase beta' chain family. RpoC2 subfamily. In plastids the minimal PEP RNA polymerase catalytic core is composed of four subunits: alpha, beta, beta', and beta''. When a (nuclear-encoded) sigma factor is associated with the core the holoenzyme is formed, which can initiate transcription. Zn(2+) serves as cofactor.

The protein localises to the plastid. It is found in the chloroplast. It catalyses the reaction RNA(n) + a ribonucleoside 5'-triphosphate = RNA(n+1) + diphosphate. DNA-dependent RNA polymerase catalyzes the transcription of DNA into RNA using the four ribonucleoside triphosphates as substrates. The protein is DNA-directed RNA polymerase subunit beta'' of Cucumis sativus (Cucumber).